The sequence spans 341 residues: Short chain dehydrogenase virL (341 aa).

NADP(+) is bound by residues Leu49, Lys74, Asp97, Asn123, Tyr210, and Lys214. Tyr210 acts as the Proton donor in catalysis. Lys214 (lowers pKa of active site Tyr) is an active-site residue.

Belongs to the short-chain dehydrogenases/reductases (SDR) family.

Its pathway is secondary metabolite biosynthesis. Its function is as follows. Short chain dehydrogenase; part of the gene cluster that mediates the biosynthesis of virensols and trichoxide, fungal natural products that contain or are derived from a salicylaldehyde core. The pathway begins with the synthesis of the reduced chain in virensol C by the highly reducing polyketide synthase virA via condensation of one acetate and 8 malonate units. VirA has interesting programming rules since the first 2 ketides are fully reduced, the 3 following ketides undergo beta-dehydration, and the last 3 ketides are only reduced to beta-hydroxys to yield the trihydroxy portion. The production of aldehyde virensol C by virA alone is surprising, since virA does not contain a reductase (R) domain that is typically associated with reductive product release in HRPKS. The cupin-domain enzyme virC is involved in enhancing virA product turnover. The short-chain dehydrogenase virB then oxidizes the C-7 alcohol of virensol C to a ketone, yielding virensol D. Virensol D is further transformed to salicylaldehyde 5-deoxyaurocitrin by the short-chain dehydrogenase virD. VirD catalyzes the dehydrogenation of C-3 to form the beta-ketone aldehyde, which is followed by the generation of the nucleophilic C-2 that is required for the intramolecular aldol condensation between C-2 and C-7, itself followed by dehydration and aromatization which leads to salicylaldehyde 5-deoxyaurocitrin. While the dehydrogenation of virensol D is definitely catalyzed by virD, the aldol condensation and dehydration may be uncatalyzed or assisted by virD. The short chain dehydrogenase virG then converts salicylaldehyde 5-deoxyaurocitrin into virensol B which is further hydroxylated by the cytochrome P450 monooxygenase virE to yield the hydroquinone virensol A. VirI then may oxidize virensol A to form the quinone, while virH performs the epoxidation. Finally, the two remaining short-chain dehydrogenases, virK and virL, are probably responsible for reducing the ketones to the corresponding alcohols to furnish the epoxycyclohexanol structure in trichoxide. This Hypocrea virens (strain Gv29-8 / FGSC 10586) (Gliocladium virens) protein is Short chain dehydrogenase virL.